The following is a 278-amino-acid chain: 4-deoxy-L-threo-5-hexosulose-uronate ketol-isomerase (278 aa).

The Zn(2+) site is built by histidine 196, histidine 198, glutamate 203, and histidine 245.

It belongs to the KduI family. It depends on Zn(2+) as a cofactor.

The enzyme catalyses 5-dehydro-4-deoxy-D-glucuronate = 3-deoxy-D-glycero-2,5-hexodiulosonate. It participates in glycan metabolism; pectin degradation; 2-dehydro-3-deoxy-D-gluconate from pectin: step 4/5. In terms of biological role, catalyzes the isomerization of 5-dehydro-4-deoxy-D-glucuronate to 3-deoxy-D-glycero-2,5-hexodiulosonate. This chain is 4-deoxy-L-threo-5-hexosulose-uronate ketol-isomerase, found in Yersinia enterocolitica serotype O:8 / biotype 1B (strain NCTC 13174 / 8081).